Consider the following 500-residue polypeptide: Lysine--tRNA ligase (500 aa).

Residues glutamate 410 and glutamate 417 each coordinate Mg(2+).

Belongs to the class-II aminoacyl-tRNA synthetase family. As to quaternary structure, homodimer. Mg(2+) is required as a cofactor.

Its subcellular location is the cytoplasm. It catalyses the reaction tRNA(Lys) + L-lysine + ATP = L-lysyl-tRNA(Lys) + AMP + diphosphate. The chain is Lysine--tRNA ligase from Pseudomonas fluorescens (strain ATCC BAA-477 / NRRL B-23932 / Pf-5).